We begin with the raw amino-acid sequence, 249 residues long: MYKLVLIRHGESTWNKENRFTGWVDVDLTEQGNREARQAGQLLKEAGYTFDIAYTSVLKRAIRTLWHVQDQMDLMYVPVVHSWRLNERHYGALSGLNKAETAAKYGDEQVLVWRRSYDTPPPALEPGDERAPYADPRYAKVPREQLPLTECLKDTVARVLPLWNESIAPAVKAGKQVLIAAHGNSLRALIKYLDGISDADIVGLNIPNGVPLVYELDESLTPIRHYYLGDQEAIAKAQAAVAQQGKSAA.

Substrate is bound by residues 8–15, 21–22, Arg60, 87–90, Lys98, 114–115, and 183–184; these read RHGESTWN, TG, ERHY, RR, and GN. His9 serves as the catalytic Tele-phosphohistidine intermediate. The Proton donor/acceptor role is filled by Glu87.

The protein belongs to the phosphoglycerate mutase family. BPG-dependent PGAM subfamily. As to quaternary structure, homodimer.

It catalyses the reaction (2R)-2-phosphoglycerate = (2R)-3-phosphoglycerate. It participates in carbohydrate degradation; glycolysis; pyruvate from D-glyceraldehyde 3-phosphate: step 3/5. In terms of biological role, catalyzes the interconversion of 2-phosphoglycerate and 3-phosphoglycerate. The chain is 2,3-bisphosphoglycerate-dependent phosphoglycerate mutase from Burkholderia mallei (strain NCTC 10247).